The primary structure comprises 382 residues: MGSAVRIAMVAGEASGDLLASHLIAALKTHLPDAVFYGIGGPKMQAQGFDSWWPMEKLSVMGYWDALKHYREIAGIRRQLKKRLLDLKPDIFIGVDAPDFNLGLETNLKAAGVRTIHYVSPSIWAWRGGRVKKIAKAVNRVLALFPMEPALYEKERVPVTYVGHPLADIIPLQTSKQAVREKLSLPRDYPIFAMLPGSRQGELAMMAETFVETAKIIRERHLPNAMFVVPLATRETRLQFELAIYNRQAGDVPFRLLFGHAQDALGAADVSLVASGTATLEAALIKRPMVITYKIAKFSYWLMKRMAYLPYVGLPNVLAGRFVVPEILQDEATPENLAEALVKLYEDKENAEAVEEAFTEIHLQLRQNTAEKAARAVIECLN.

Belongs to the LpxB family.

It catalyses the reaction a lipid X + a UDP-2-N,3-O-bis[(3R)-3-hydroxyacyl]-alpha-D-glucosamine = a lipid A disaccharide + UDP + H(+). It functions in the pathway bacterial outer membrane biogenesis; LPS lipid A biosynthesis. Condensation of UDP-2,3-diacylglucosamine and 2,3-diacylglucosamine-1-phosphate to form lipid A disaccharide, a precursor of lipid A, a phosphorylated glycolipid that anchors the lipopolysaccharide to the outer membrane of the cell. This Dechloromonas aromatica (strain RCB) protein is Lipid-A-disaccharide synthase.